The following is a 319-amino-acid chain: NADH-quinone oxidoreductase subunit H 1 (319 aa).

The next 8 helical transmembrane spans lie at 1 to 21 (MIGL…LLVV), 74 to 94 (FAYI…FGVI), 107 to 127 (VGVL…VLGA), 147 to 167 (LAYE…AGSL), 179 to 199 (VWFV…GVAA), 238 to 258 (VLLV…GPWL), 262 to 282 (IWFG…RATL), and 293 to 313 (FAWK…GIVV).

It belongs to the complex I subunit 1 family. In terms of assembly, NDH-1 is composed of 14 different subunits. Subunits NuoA, H, J, K, L, M, N constitute the membrane sector of the complex.

Its subcellular location is the cell inner membrane. It catalyses the reaction a quinone + NADH + 5 H(+)(in) = a quinol + NAD(+) + 4 H(+)(out). NDH-1 shuttles electrons from NADH, via FMN and iron-sulfur (Fe-S) centers, to quinones in the respiratory chain. The immediate electron acceptor for the enzyme in this species is believed to be ubiquinone. Couples the redox reaction to proton translocation (for every two electrons transferred, four hydrogen ions are translocated across the cytoplasmic membrane), and thus conserves the redox energy in a proton gradient. This subunit may bind ubiquinone. The polypeptide is NADH-quinone oxidoreductase subunit H 1 (Rhodopseudomonas palustris (strain BisB5)).